The following is a 302-amino-acid chain: uncharacterized protein (302 aa).

Belongs to the HAD-like hydrolase superfamily.

This is an uncharacterized protein from Saccharomyces cerevisiae (strain ATCC 204508 / S288c) (Baker's yeast).